The sequence spans 660 residues: Iron(3+)-hydroxamate import system permease protein FhuB (660 aa).

The next 18 membrane-spanning stretches (helical) occupy residues 5-25 (IALFPALLLALLVIVATALTW), 62-82 (LAISLLVGAGLGLVGVLFQQV), 93-113 (LGVATGAQLGITVTTLWAIPG), 118-138 (QFAAQAGACVVGLIVFGVAWG), 147-167 (ILAGLVVSLYCGAINQLLVIF), 197-217 (QLLGGVMLTLLLLRPLTLMGL), 240-260 (AIVISALLVNAVGIIGFIGLF), 277-297 (LMLASLIGALILWLSDQIILW), 303-323 (MEVSTGSVTALIGAPLLLWLL), 348-368 (LAFALAGGVLLLMAVVVALSF), 391-411 (WPRIMAALFAGVMLAVAGCII), 424-444 (VLGISSGAAFGVVLMLFLVPG), 447-467 (FGWLLPAGSLGAAVTLLIIMI), 479-499 (MLLAGMALSTAFTMLLMMLQA), 528-548 (GIVMVILLAITPLCRRWLTIL), 567-587 (IALLLLAACLTATATMTIGPL), 607-627 (MPHIVISALVGGLLLVFADWC), and 635-655 (FQIPAGLLSTFIGAPYFIYLL).

It belongs to the binding-protein-dependent transport system permease family. FecCD subfamily. As to quaternary structure, the complex is composed of two ATP-binding proteins (FhuC), a transmembrane protein (FhuB) and a solute-binding protein (FhuD). FhuB interacts with FhuC. FhuB interacts with FhuD. FhuB binds substrate-loaded FhuD more strongly than FhuD alone.

The protein localises to the cell inner membrane. In terms of biological role, part of the ABC transporter complex FhuCDB involved in iron(3+)-hydroxamate import. Responsible for the translocation of the substrate across the membrane. This is Iron(3+)-hydroxamate import system permease protein FhuB (fhuB) from Escherichia coli (strain K12).